Here is a 156-residue protein sequence, read N- to C-terminus: uncharacterized protein (156 aa).

Residues 11-156 enclose the N-acetyltransferase domain; that stretch reads EEFRSYLTYT…ETDVVMSKKL (146 aa).

It belongs to the acetyltransferase family. Homodimer.

This is an uncharacterized protein from Bacillus subtilis (strain 168).